The chain runs to 586 residues: MFIEYSRLPGFESINISFSRGMLRLAKFTNFATYKQKLEYFRLLAGSNKYIQRISVADFERHPDEINYIYIILISILQMEECMPVLVLCPTVYWVRFHWPGKCSVNSLNFTNETLKSAFHAVFTPYFALMKKVLGRIKNNMLLFAEPHANLNNLFVKHFHDLIYKSVKDEKTGEAILYLRTNVNVPNVFIDDKRAVFHGDGMKIGKFTGKFLCFSFKRTIRWSKLDSVDSFAVTTVNYRVSVNWEKTPRKTFLSLDSDTKNLHYISKKILNKKGKNATTSKTTKSSCTSENVCDDKTFSVEFPLTTSAKTEYLLRSNFSLEKINESNNPTLQELTLNRTHRLYRSNFRNEQSTTQRKFEKIGRTVSTDSGNKLLTFPEQKATRDSNPFSIELTHATVISSDESALKDTTNQAIAEMQRITPAIAKTISRRTANWVCSNPAPDPYGEPSTWSRILTPNLKIISESSPYYPVHLASPNSTFSRDQSVRSVVMRRSSVCVEKQNSFFRNYEHFKNILSRRTIKVKTSCPRLSVDVSDNKRENLSQEHLILPNKSREKVNRFKNCLHRVAEALRAAKENWDQHNPRNSIH.

This is an uncharacterized protein from Saccharomyces cerevisiae (strain ATCC 204508 / S288c) (Baker's yeast).